The sequence spans 438 residues: Aspartate--tRNA(Asp) ligase (438 aa).

E170 is an L-aspartate binding site. Residues 192 to 195 are aspartate; the sequence is QLYK. L-aspartate is bound at residue R214. ATP-binding positions include 214–216, 222–224, and E361; these read RAE and RHL. 2 residues coordinate Mg(2+): E361 and S364. The L-aspartate site is built by S364 and R368. 409 to 412 serves as a coordination point for ATP; it reads GAER.

The protein belongs to the class-II aminoacyl-tRNA synthetase family. Type 2 subfamily. Homodimer. It depends on Mg(2+) as a cofactor.

It is found in the cytoplasm. It carries out the reaction tRNA(Asp) + L-aspartate + ATP = L-aspartyl-tRNA(Asp) + AMP + diphosphate. Catalyzes the attachment of L-aspartate to tRNA(Asp) in a two-step reaction: L-aspartate is first activated by ATP to form Asp-AMP and then transferred to the acceptor end of tRNA(Asp). The chain is Aspartate--tRNA(Asp) ligase from Pyrococcus abyssi (strain GE5 / Orsay).